The sequence spans 332 residues: 2,3-diketo-L-gulonate reductase (332 aa).

The Proton donor role is filled by His44. Residues 168-174 (ITMIDMS), 224-225 (WK), and 304-306 (GHE) each bind NAD(+).

This sequence belongs to the LDH2/MDH2 oxidoreductase family. DlgD subfamily. Homodimer.

Its subcellular location is the cytoplasm. The catalysed reaction is 3-dehydro-L-gulonate + NAD(+) = 2,3-dioxo-L-gulonate + NADH + H(+). It catalyses the reaction 3-dehydro-L-gulonate + NADP(+) = 2,3-dioxo-L-gulonate + NADPH + H(+). Catalyzes the reduction of 2,3-diketo-L-gulonate in the presence of NADH, to form 3-keto-L-gulonate. In Citrobacter koseri (strain ATCC BAA-895 / CDC 4225-83 / SGSC4696), this protein is 2,3-diketo-L-gulonate reductase.